A 332-amino-acid polypeptide reads, in one-letter code: Lipoyl synthase (332 aa).

Residues cysteine 74, cysteine 79, cysteine 85, cysteine 100, cysteine 104, cysteine 107, and serine 314 each coordinate [4Fe-4S] cluster. The 219-residue stretch at 85 to 303 folds into the Radical SAM core domain; sequence CFGKGTATFM…EQEAYRMGFS (219 aa).

Belongs to the radical SAM superfamily. Lipoyl synthase family. [4Fe-4S] cluster serves as cofactor.

The protein resides in the cytoplasm. It carries out the reaction [[Fe-S] cluster scaffold protein carrying a second [4Fe-4S](2+) cluster] + N(6)-octanoyl-L-lysyl-[protein] + 2 oxidized [2Fe-2S]-[ferredoxin] + 2 S-adenosyl-L-methionine + 4 H(+) = [[Fe-S] cluster scaffold protein] + N(6)-[(R)-dihydrolipoyl]-L-lysyl-[protein] + 4 Fe(3+) + 2 hydrogen sulfide + 2 5'-deoxyadenosine + 2 L-methionine + 2 reduced [2Fe-2S]-[ferredoxin]. It functions in the pathway protein modification; protein lipoylation via endogenous pathway; protein N(6)-(lipoyl)lysine from octanoyl-[acyl-carrier-protein]: step 2/2. In terms of biological role, catalyzes the radical-mediated insertion of two sulfur atoms into the C-6 and C-8 positions of the octanoyl moiety bound to the lipoyl domains of lipoate-dependent enzymes, thereby converting the octanoylated domains into lipoylated derivatives. The sequence is that of Lipoyl synthase from Verminephrobacter eiseniae (strain EF01-2).